The chain runs to 100 residues: Large ribosomal subunit protein uL23 (100 aa).

The protein belongs to the universal ribosomal protein uL23 family. Part of the 50S ribosomal subunit. Contacts protein L29, and trigger factor when it is bound to the ribosome.

Functionally, one of the early assembly proteins it binds 23S rRNA. One of the proteins that surrounds the polypeptide exit tunnel on the outside of the ribosome. Forms the main docking site for trigger factor binding to the ribosome. The chain is Large ribosomal subunit protein uL23 from Mycobacterium leprae (strain Br4923).